The primary structure comprises 122 residues: Large ribosomal subunit protein uL18 (122 aa).

Belongs to the universal ribosomal protein uL18 family. Part of the 50S ribosomal subunit; part of the 5S rRNA/L5/L18/L25 subcomplex. Contacts the 5S and 23S rRNAs.

Functionally, this is one of the proteins that bind and probably mediate the attachment of the 5S RNA into the large ribosomal subunit, where it forms part of the central protuberance. The chain is Large ribosomal subunit protein uL18 from Buchnera aphidicola subsp. Acyrthosiphon pisum (strain 5A).